The following is a 1842-amino-acid chain: Plexin-B2 (1842 aa).

The first 19 residues, 1 to 19 (MALPLWALTFLGLTGLGLS), serve as a signal peptide directing secretion. Positions 20–468 (LRSRKPESFR…TQDKVFRLPV (449 aa)) constitute a Sema domain. The Extracellular portion of the chain corresponds to 20–1201 (LRSRKPESFR…EYDTRASDVP (1182 aa)). Intrachain disulfides connect Cys-78–Cys-87 and Cys-112–Cys-120. Residues Asn-127 and Asn-242 are each glycosylated (N-linked (GlcNAc...) asparagine). 3 cysteine pairs are disulfide-bonded: Cys-250/Cys-366, Cys-266/Cys-313, and Cys-331/Cys-353. Asn-393 and Asn-451 each carry an N-linked (GlcNAc...) asparagine glycan. 5 cysteine pairs are disulfide-bonded: Cys-471–Cys-488, Cys-477–Cys-520, Cys-480–Cys-497, Cys-491–Cys-503, and Cys-557–Cys-576. Residue Asn-798 is glycosylated (N-linked (GlcNAc...) asparagine). IPT/TIG domains lie at 806 to 895 (PVIT…QFTY), 898 to 982 (PQPL…SFTY), and 986 to 1095 (PMIR…VFEY). N-linked (GlcNAc...) asparagine glycosylation is found at Asn-919, Asn-1053, and Asn-1072. The helical transmembrane segment at 1202–1222 (LSLILPLVMVPMVFIIVVSIY) threads the bilayer. The Cytoplasmic segment spans residues 1223–1842 (CYWRKSQQAE…AALENKVTDL (620 aa)). A phosphoserine mark is found at Ser-1240, Ser-1248, and Ser-1574.

Belongs to the plexin family. In terms of assembly, monomer, and heterodimer with PLXNB1. Interacts with MET, ARHGEF11 and ARHGEF12. May also interact with MST1R. In terms of tissue distribution, detected in macrophages from spleen and bone marrow (at protein level). Detected in granule cells in the developing cerebellum, dentate gyrus and olfactory bulb. Expressed in neurons and glia in the developing hippocampus.

The protein localises to the cell membrane. Functionally, cell surface receptor for SEMA4C, SEMA4D and SEMA4G that plays an important role in cell-cell signaling. Plays a role in glutamatergic synapse development and is required for SEMA4A-mediated excitatory synapse development. Binding to class 4 semaphorins promotes downstream activation of RHOA and phosphorylation of ERBB2 at 'Tyr-1248'. Also acts as a cell surface receptor for angiogenin (ANG); promoting ANG endocytosis and translocation to the cytoplasm or nucleus. Required for normal differentiation and migration of neuronal cells during brain corticogenesis and for normal embryonic brain development. Regulates the migration of cerebellar granule cells in the developing brain. Plays a role in RHOA activation and subsequent changes of the actin cytoskeleton. Plays a role in axon guidance, invasive growth and cell migration. May modulate the activity of RAC1 and CDC42. Down-regulates macrophage migration in wound-healing assays (in vitro). In Mus musculus (Mouse), this protein is Plexin-B2.